The sequence spans 500 residues: Cytochrome P450 monooxygenase ausI (500 aa).

Residues 8-28 (LALLGQPLVPGLMVVSAILYL) form a helical membrane-spanning segment. Heme is bound at residue Cys440.

Belongs to the cytochrome P450 family. It depends on heme as a cofactor.

It is found in the membrane. It functions in the pathway secondary metabolite biosynthesis; terpenoid biosynthesis. Its function is as follows. Cytochrome P450 monooxygenase; part of the gene cluster B that mediates the biosynthesis of the fungal meroterpenoid acetoxydehydroaustin. The first step of the pathway is the synthesis of 3,5-dimethylorsellinic acid by the polyketide synthase ausA. 3,5-dimethylorsellinic acid is then prenylated by the polyprenyl transferase ausN. Further epoxidation by the FAD-dependent monooxygenase ausM and cyclization by the probable terpene cyclase ausL lead to the formation of protoaustinoid A. Protoaustinoid A is then oxidized to spiro-lactone preaustinoid A3 by the combined action of the FAD-binding monooxygenases ausB and ausC, and the dioxygenase ausE. Acid-catalyzed keto-rearrangement and ring contraction of the tetraketide portion of preaustinoid A3 by ausJ lead to the formation of preaustinoid A4. The aldo-keto reductase ausK, with the help of ausH, is involved in the next step by transforming preaustinoid A4 into isoaustinone which is in turn hydroxylated by the P450 monooxygenase ausI to form austinolide. The cytochrome P450 monooxygenase ausG then modifies austinolide to austinol. Austinol is further acetylated to austin by the O-acetyltransferase ausP, which spontaneously changes to dehydroaustin. The cytochrome P450 monooxygenase then converts dehydroaustin is into 7-dehydrodehydroaustin. The hydroxylation catalyzed by ausR permits the second O-acetyltransferase ausQ to add an additional acetyl group to the molecule, leading to the formation of acetoxydehydroaustin. Due to genetic rearrangements of the clusters and the subsequent loss of some enzymes, the end product of the Penicillium brasilianum austinoid biosynthesis clusters is acetoxydehydroaustin. The chain is Cytochrome P450 monooxygenase ausI from Penicillium brasilianum.